A 290-amino-acid chain; its full sequence is ATP synthase gamma chain (290 aa).

Belongs to the ATPase gamma chain family. As to quaternary structure, F-type ATPases have 2 components, CF(1) - the catalytic core - and CF(0) - the membrane proton channel. CF(1) has five subunits: alpha(3), beta(3), gamma(1), delta(1), epsilon(1). CF(0) has three main subunits: a, b and c.

It is found in the cell inner membrane. In terms of biological role, produces ATP from ADP in the presence of a proton gradient across the membrane. The gamma chain is believed to be important in regulating ATPase activity and the flow of protons through the CF(0) complex. The polypeptide is ATP synthase gamma chain (Dictyoglomus turgidum (strain DSM 6724 / Z-1310)).